The following is a 205-amino-acid chain: Lymphotoxin-alpha (205 aa).

Positions 1–34 (MTPPERLFLSRVRGTPLHLLLLGLLLVLLPGAQG) are cleaved as a signal peptide. O-linked (GalNAc...) threonine glycosylation is present at Thr-41. In terms of domain architecture, THD spans 63–205 (PAAHLIGDPS…STVFFGAFAL (143 aa)). Asn-96 is a glycosylation site (N-linked (GlcNAc...) asparagine).

This sequence belongs to the tumor necrosis factor family. As to quaternary structure, homotrimer, and heterotrimer of either two LTB and one LTA subunits or (less prevalent) two LTA and one LTB subunits. Interacts with TNFRSF14.

It localises to the secreted. The protein resides in the membrane. In terms of biological role, cytokine that in its homotrimeric form binds to TNFRSF1A/TNFR1, TNFRSF1B/TNFBR and TNFRSF14/HVEM. In its heterotrimeric form with LTB binds to TNFRSF3/LTBR. Lymphotoxin is produced by lymphocytes and is cytotoxic for a wide range of tumor cells in vitro and in vivo. The protein is Lymphotoxin-alpha (LTA) of Macaca mulatta (Rhesus macaque).